The primary structure comprises 309 residues: Probable inactive poly [ADP-ribose] polymerase SRO5 (309 aa).

The 228-residue stretch at 28 to 255 folds into the PARP catalytic domain; sequence CDSSSDRSFA…AFPVLIKALS (228 aa). Positions 238-309 constitute an RST domain; the sequence is KRLRSPWMAF…IKACGHKVQH (72 aa).

Interacts with dehydration-responsive DREB2 proteins and a number of transcription factors belonging to several protein families.

Its subcellular location is the nucleus matrix. Functionally, probable inactive ADP-ribosyltransferase that may be involved in stress and developmental responses. This is Probable inactive poly [ADP-ribose] polymerase SRO5 (SRO5) from Arabidopsis thaliana (Mouse-ear cress).